Consider the following 227-residue polypeptide: Cytochrome c oxidase subunit 2 (227 aa).

Over 1–26 (MSTWKNLFLQDSASPLMELLMCFHDH) the chain is Mitochondrial intermembrane. A helical membrane pass occupies residues 27–48 (AMLILILITIMVSQMLLSMLFN). The Mitochondrial matrix portion of the chain corresponds to 49–62 (KLSHRYLLEGQLIE). Residues 63–82 (TIWTIIPAIILILIALPSLR) form a helical membrane-spanning segment. Residues 83 to 227 (LLYILDEINN…LFLNWVISKA (145 aa)) lie on the Mitochondrial intermembrane side of the membrane. Residues histidine 161, cysteine 196, glutamate 198, cysteine 200, histidine 204, and methionine 207 each contribute to the Cu cation site. Glutamate 198 provides a ligand contact to Mg(2+).

This sequence belongs to the cytochrome c oxidase subunit 2 family. As to quaternary structure, component of the cytochrome c oxidase (complex IV, CIV), a multisubunit enzyme composed of a catalytic core of 3 subunits and several supernumerary subunits. The complex exists as a monomer or a dimer and forms supercomplexes (SCs) in the inner mitochondrial membrane with ubiquinol-cytochrome c oxidoreductase (cytochrome b-c1 complex, complex III, CIII). Cu cation is required as a cofactor.

The protein resides in the mitochondrion inner membrane. It carries out the reaction 4 Fe(II)-[cytochrome c] + O2 + 8 H(+)(in) = 4 Fe(III)-[cytochrome c] + 2 H2O + 4 H(+)(out). Its function is as follows. Component of the cytochrome c oxidase, the last enzyme in the mitochondrial electron transport chain which drives oxidative phosphorylation. The respiratory chain contains 3 multisubunit complexes succinate dehydrogenase (complex II, CII), ubiquinol-cytochrome c oxidoreductase (cytochrome b-c1 complex, complex III, CIII) and cytochrome c oxidase (complex IV, CIV), that cooperate to transfer electrons derived from NADH and succinate to molecular oxygen, creating an electrochemical gradient over the inner membrane that drives transmembrane transport and the ATP synthase. Cytochrome c oxidase is the component of the respiratory chain that catalyzes the reduction of oxygen to water. Electrons originating from reduced cytochrome c in the intermembrane space (IMS) are transferred via the dinuclear copper A center (CU(A)) of subunit 2 and heme A of subunit 1 to the active site in subunit 1, a binuclear center (BNC) formed by heme A3 and copper B (CU(B)). The BNC reduces molecular oxygen to 2 water molecules using 4 electrons from cytochrome c in the IMS and 4 protons from the mitochondrial matrix. The protein is Cytochrome c oxidase subunit 2 (COII) of Sitophilus granarius (Granary weevil).